The following is a 127-amino-acid chain: Large ribosomal subunit protein bL19 (127 aa).

Belongs to the bacterial ribosomal protein bL19 family.

Functionally, this protein is located at the 30S-50S ribosomal subunit interface and may play a role in the structure and function of the aminoacyl-tRNA binding site. In Acidovorax ebreus (strain TPSY) (Diaphorobacter sp. (strain TPSY)), this protein is Large ribosomal subunit protein bL19.